Here is a 20-residue protein sequence, read N- to C-terminus: Astacin-like peptidase p18 (20 aa).

One can recognise a Peptidase M12A domain in the interval 1–20 (NAIPGNYYRWPYAKVPYVID).

Requires Zn(2+) as cofactor.

Its function is as follows. Active against casein. Has a role as a digestive enzyme. This is Astacin-like peptidase p18 from Argiope aurantia (Black-and-yellow garden spider).